Reading from the N-terminus, the 138-residue chain is Small ribosomal subunit protein uS11c (138 aa).

The disordered stretch occupies residues 1–23; that stretch reads MAKAIPRVGSRKNGRISSRKSAR. A compositionally biased stretch (basic residues) spans 9–23; it reads GSRKNGRISSRKSAR.

This sequence belongs to the universal ribosomal protein uS11 family. Part of the 30S ribosomal subunit.

It is found in the plastid. Its subcellular location is the chloroplast. The chain is Small ribosomal subunit protein uS11c from Coffea arabica (Arabian coffee).